Consider the following 229-residue polypeptide: Potassium/proton antiporter CemA (229 aa).

4 helical membrane-spanning segments follow: residues 7 to 27, 114 to 134, 154 to 174, and 189 to 209; these read FTPL…SLSF, ITCF…LVIL, ILLL…ELMI, and IISG…KYWI.

It belongs to the CemA family.

The protein resides in the plastid. It localises to the chloroplast inner membrane. It carries out the reaction K(+)(in) + H(+)(out) = K(+)(out) + H(+)(in). Functionally, contributes to K(+)/H(+) antiport activity by supporting proton efflux to control proton extrusion and homeostasis in chloroplasts in a light-dependent manner to modulate photosynthesis. Prevents excessive induction of non-photochemical quenching (NPQ) under continuous-light conditions. Indirectly promotes efficient inorganic carbon uptake into chloroplasts. This is Potassium/proton antiporter CemA from Platanus occidentalis (Sycamore).